The chain runs to 382 residues: Layilin (382 aa).

Residues 1 to 21 form the signal peptide; it reads MRPGTALQAVLLAVLLVGLRA. The Extracellular portion of the chain corresponds to 22–235; sequence ATGRLLSASD…SREAALNLAY (214 aa). Residues 45–185 enclose the C-type lectin domain; sequence TQRPCYKVIY…CNMKNNFICK (141 aa). Disulfide bonds link Cys-71–Cys-184 and Cys-150–Cys-176. The N-linked (GlcNAc...) asparagine glycan is linked to Asn-117. A helical transmembrane segment spans residues 236–256; sequence ILIPSIPLLLLLVVTTVVCWV. Residues 257–382 are Cytoplasmic-facing; that stretch reads WICRKRKREQ…GWVENEIYGY (126 aa). The segment at 266 to 285 is disordered; sequence QPDPSTKKQHTIWPSPHQGN. Residues Ser-286 and Ser-299 each carry the phosphoserine modification. An interaction with NF2 region spans residues 330 to 374; sequence DYDNMAVNPSESGFVTLVSVESGFVTNDIYEFSPDQMGRSKESGW. The segment at 337–382 is interaction with TLN1; it reads NPSESGFVTLVSVESGFVTNDIYEFSPDQMGRSKESGWVENEIYGY. 5 repeat units span residues 340–344, 350–354, 356–359, 371–375, and 377–380. The 3 X 5 AA repeats of E-S-G-X-V stretch occupies residues 340-375; sequence ESGFVTLVSVESGFVTNDIYEFSPDQMGRSKESGWV. A 2 X 4 AA repeats of N-X-I-Y region spans residues 356–380; it reads NDIYEFSPDQMGRSKESGWVENEIY.

In terms of assembly, interacts with NF2, RDX and TLN1.

The protein localises to the membrane. In terms of biological role, receptor for hyaluronate. The protein is Layilin (LAYN) of Homo sapiens (Human).